A 459-amino-acid polypeptide reads, in one-letter code: Adenylosuccinate synthetase isozyme 1 C (459 aa).

The disordered stretch occupies residues 1–31 (MSFSWSAKDHKSYTNPPSNPTQGLKRPRNDT). The segment covering 13–22 (YTNPPSNPTQ) has biased composition (polar residues). GTP-binding positions include 44 to 50 (GDEGKGK) and 72 to 74 (GHT). D45 functions as the Proton acceptor in the catalytic mechanism. Mg(2+) is bound by residues D45 and G72. D45 provides a ligand contact to substrate. IMP-binding positions include 45-48 (DEGK), 70-73 (NAGH), T165, R179, N258, T273, and R337. H73 functions as the Proton donor in the catalytic mechanism. Substrate is bound at residue 333–339 (VTTGRKR). Residues R339, 365–367 (KLD), and 447–450 (GVGK) each bind GTP.

This sequence belongs to the adenylosuccinate synthetase family. Homodimer. It depends on Mg(2+) as a cofactor.

The protein localises to the cytoplasm. It carries out the reaction IMP + L-aspartate + GTP = N(6)-(1,2-dicarboxyethyl)-AMP + GDP + phosphate + 2 H(+). The protein operates within purine metabolism; AMP biosynthesis via de novo pathway; AMP from IMP: step 1/2. Functionally, component of the purine nucleotide cycle (PNC), which interconverts IMP and AMP to regulate the nucleotide levels in various tissues, and which contributes to glycolysis and ammoniagenesis. Catalyzes the first committed step in the biosynthesis of AMP from IMP. The chain is Adenylosuccinate synthetase isozyme 1 C (adss1c) from Salmo salar (Atlantic salmon).